We begin with the raw amino-acid sequence, 377 residues long: MAKADFYETLGVSKTADEKELKSAFRKLAMKFHPDKNPDDADSERKFKEINEAYETLKDPQKRAAYDRFGHAAFENGGMGGGGMGGGGFANGGFSDIFEDIFGEMMGGGRARRSSGGRERGADLRYNMEITLEEAFAGKTAQIRVPTSITCDVCSGSGAKPGTQPKTCATCQGSGRVRAAQGFFSVERTCPTCHGRGQTISDPCGKCHGQGRVTEERSLSVNIPSGIEDGTRIRLQGEGEAGMRGGPAGDLYIFLSVRPHEFFQRDGADLYCTVPISMTTAALGGTFDVTTLDGTKSRVTVPEGTQPGKQFRLKGKGMPVLRSAQTGDLYIQIQIETPQKLSKRQRELLQEFEQLSSKENNPESTGFFARMKEFFDG.

The region spanning 5–70 (DFYETLGVSK…QKRAAYDRFG (66 aa)) is the J domain. The CR-type zinc finger occupies 138-216 (GKTAQIRVPT…CHGQGRVTEE (79 aa)). Residues cysteine 151, cysteine 154, cysteine 168, cysteine 171, cysteine 190, cysteine 193, cysteine 204, and cysteine 207 each contribute to the Zn(2+) site. CXXCXGXG motif repeat units lie at residues 151-158 (CDVCSGSG), 168-175 (CATCQGSG), 190-197 (CPTCHGRG), and 204-211 (CGKCHGQG).

It belongs to the DnaJ family. In terms of assembly, homodimer. Requires Zn(2+) as cofactor.

It is found in the cytoplasm. Participates actively in the response to hyperosmotic and heat shock by preventing the aggregation of stress-denatured proteins and by disaggregating proteins, also in an autonomous, DnaK-independent fashion. Unfolded proteins bind initially to DnaJ; upon interaction with the DnaJ-bound protein, DnaK hydrolyzes its bound ATP, resulting in the formation of a stable complex. GrpE releases ADP from DnaK; ATP binding to DnaK triggers the release of the substrate protein, thus completing the reaction cycle. Several rounds of ATP-dependent interactions between DnaJ, DnaK and GrpE are required for fully efficient folding. Also involved, together with DnaK and GrpE, in the DNA replication of plasmids through activation of initiation proteins. This is Chaperone protein DnaJ from Agrobacterium fabrum (strain C58 / ATCC 33970) (Agrobacterium tumefaciens (strain C58)).